A 656-amino-acid polypeptide reads, in one-letter code: Protein sly1 homolog (656 aa).

Tandem repeats lie at residues 85–121, 203–245, 419–456, and 460–496. Positions 85-496 are 4 X approximate repeats; sequence DENLDRIQQD…QATQYEGGGT (412 aa).

Belongs to the STXBP/unc-18/SEC1 family.

Its subcellular location is the cytoplasm. It localises to the membrane. Functionally, non-vital for development. This is Protein sly1 homolog (Slh) from Drosophila virilis (Fruit fly).